The sequence spans 274 residues: 2,3,4,5-tetrahydropyridine-2,6-dicarboxylate N-succinyltransferase (274 aa).

The substrate site is built by Arg-104 and Asp-141.

Belongs to the transferase hexapeptide repeat family. In terms of assembly, homotrimer.

It is found in the cytoplasm. The enzyme catalyses (S)-2,3,4,5-tetrahydrodipicolinate + succinyl-CoA + H2O = (S)-2-succinylamino-6-oxoheptanedioate + CoA. The protein operates within amino-acid biosynthesis; L-lysine biosynthesis via DAP pathway; LL-2,6-diaminopimelate from (S)-tetrahydrodipicolinate (succinylase route): step 1/3. The protein is 2,3,4,5-tetrahydropyridine-2,6-dicarboxylate N-succinyltransferase of Shewanella frigidimarina (strain NCIMB 400).